Consider the following 596-residue polypeptide: V-type ATP synthase alpha chain (596 aa).

Residue 233–240 (GPFGAGKT) participates in ATP binding.

This sequence belongs to the ATPase alpha/beta chains family.

The enzyme catalyses ATP + H2O + 4 H(+)(in) = ADP + phosphate + 5 H(+)(out). Its function is as follows. Produces ATP from ADP in the presence of a proton gradient across the membrane. The V-type alpha chain is a catalytic subunit. In Streptococcus sanguinis (strain SK36), this protein is V-type ATP synthase alpha chain.